The chain runs to 115 residues: Large ribosomal subunit protein P2x (115 aa).

Residues 78-115 (GGGGGAASAAEPVAESKKKVEEVKDESSDDAGMMGLFD) form a disordered region. Over residues 91 to 103 (AESKKKVEEVKDE) the composition is skewed to basic and acidic residues. S104 and S105 each carry phosphoserine.

The protein belongs to the eukaryotic ribosomal protein P1/P2 family. In terms of assembly, P1 and P2 exist as dimers at the large ribosomal subunit.

Functionally, plays an important role in the elongation step of protein synthesis. This Arabidopsis thaliana (Mouse-ear cress) protein is Large ribosomal subunit protein P2x (RPP2C).